We begin with the raw amino-acid sequence, 583 residues long: J protein JJJ2 (583 aa).

The 69-residue stretch at 11–79 folds into the J domain; sequence RTTYYSILGL…KLRYDRDLKI (69 aa). The segment covering 215-224 has biased composition (polar residues); that stretch reads SYSEDPNSCL. A disordered region spans residues 215–313; that stretch reads SYSEDPNSCL…SGSHDSNLQS (99 aa). Position 229 is a phosphoserine (serine 229). Over residues 240–252 the composition is skewed to low complexity; sequence QQQQQQQQQQQQQ. Basic and acidic residues predominate over residues 262–281; sequence SPDEEKKNNKEPKRESRVSP. Residues 298 to 313 are compositionally biased toward polar residues; it reads KTSTFSSGSHDSNLQS.

Its subcellular location is the cytoplasm. The protein resides in the nucleus. The chain is J protein JJJ2 (JJJ2) from Saccharomyces cerevisiae (strain ATCC 204508 / S288c) (Baker's yeast).